The sequence spans 142 residues: Large ribosomal subunit protein uL13 (142 aa).

It belongs to the universal ribosomal protein uL13 family. In terms of assembly, part of the 50S ribosomal subunit.

This protein is one of the early assembly proteins of the 50S ribosomal subunit, although it is not seen to bind rRNA by itself. It is important during the early stages of 50S assembly. This Coxiella burnetii (strain CbuG_Q212) (Coxiella burnetii (strain Q212)) protein is Large ribosomal subunit protein uL13.